The following is a 163-amino-acid chain: NADH-quinone oxidoreductase subunit I (163 aa).

2 4Fe-4S ferredoxin-type domains span residues 55-84 (RRYP…IEAE) and 94-123 (TRYD…EGPN). [4Fe-4S] cluster-binding residues include Cys-64, Cys-67, Cys-70, Cys-74, Cys-103, Cys-106, Cys-109, and Cys-113.

This sequence belongs to the complex I 23 kDa subunit family. In terms of assembly, NDH-1 is composed of 14 different subunits. Subunits NuoA, H, J, K, L, M, N constitute the membrane sector of the complex. The cofactor is [4Fe-4S] cluster.

Its subcellular location is the cell inner membrane. It catalyses the reaction a quinone + NADH + 5 H(+)(in) = a quinol + NAD(+) + 4 H(+)(out). Functionally, NDH-1 shuttles electrons from NADH, via FMN and iron-sulfur (Fe-S) centers, to quinones in the respiratory chain. The immediate electron acceptor for the enzyme in this species is believed to be ubiquinone. Couples the redox reaction to proton translocation (for every two electrons transferred, four hydrogen ions are translocated across the cytoplasmic membrane), and thus conserves the redox energy in a proton gradient. In Caulobacter vibrioides (strain ATCC 19089 / CIP 103742 / CB 15) (Caulobacter crescentus), this protein is NADH-quinone oxidoreductase subunit I.